Consider the following 582-residue polypeptide: Kelch-like protein diablo (582 aa).

The interval 1–22 is disordered; the sequence is MGDVLISDRPPSPARLSHTSEK. One can recognise a BTB domain in the interval 41–108; the sequence is CDVVINVSGR…CYTSHIVVEE (68 aa). The 103-residue stretch at 143-245 folds into the BACK domain; it reads CLGIRAFADT…SPKFLVGTVG (103 aa). Kelch repeat units follow at residues 292–338, 340–386, 387–433, 435–480, 482–527, and 528–574; these read VLFA…VLND, LYAV…VLDG, FLYA…VLGG, LYAI…VFNN, IYAV…VVNG, and QLYA…VMRA.

It functions in the pathway protein modification; protein ubiquitination. Functionally, probable substrate-specific adapter of an E3 ubiquitin-protein ligase complex which mediates the ubiquitination and subsequent proteasomal degradation of target proteins. May have a role in synapse differentiation and growth. The sequence is that of Kelch-like protein diablo from Culex quinquefasciatus (Southern house mosquito).